A 163-amino-acid chain; its full sequence is Nuclear cap-binding protein subunit 2 (163 aa).

MRNA-binding positions include Tyr-18, Tyr-41, 110 to 114 (RVDWD), 121 to 125 (RQYGR), and 131 to 132 (QV). One can recognise an RRM domain in the interval 38-116 (STLYVGNLSF…RIVRVDWDAG (79 aa)).

The protein belongs to the RRM NCBP2 family. As to quaternary structure, component of the nuclear cap-binding complex (CBC), a heterodimer composed of Cbp80 and Cbp20 that interacts with m7GpppG-capped RNA.

It is found in the nucleus. Component of the cap-binding complex (CBC), which binds co-transcriptionally to the 5' cap of pre-mRNAs and is involved in various processes such as pre-mRNA splicing and RNA-mediated gene silencing (RNAi). The CBC complex is involved in miRNA-mediated RNA interference and is required for primary microRNAs (miRNAs) processing. Also involved in innate immunity via the short interfering RNAs (siRNAs) processing machinery by restricting the viral RNA production. In the CBC complex, Cbp20 recognizes and binds capped RNAs (m7GpppG-capped RNA) but requires Cbp80 to stabilize the movement of its N-terminal loop and lock the CBC into a high affinity cap-binding state with the cap structure. This is Nuclear cap-binding protein subunit 2 (Cbp20) from Anopheles gambiae (African malaria mosquito).